The primary structure comprises 569 residues: 4-hydroxy-7-methoxy-3-oxo-3,4-dihydro-2H-1,4-benzoxazin-2-yl glucoside beta-D-glucosidase 1a, chloroplastic (569 aa).

The N-terminal 50 residues, 1 to 50 (MALLAAATLNPTTHLSLRSRAGRNSENLWLRSAASSQKSKGRFCNLTIRA), are a transit peptide targeting the chloroplast. Residues Q92, H194, and 239–240 (NE) each bind a beta-D-glucoside. E240 (proton donor) is an active-site residue. Residues C259 and C265 are joined by a disulfide bond. Residues Y383, E456, W504, 511–512 (EW), and F520 each bind a beta-D-glucoside. Residue E456 is the Nucleophile of the active site.

It belongs to the glycosyl hydrolase 1 family. In terms of assembly, homo- and heterohexamers. As to expression, expressed in young seedlings early after germination.

The protein localises to the plastid. Its subcellular location is the chloroplast. The enzyme catalyses Hydrolysis of terminal, non-reducing beta-D-glucosyl residues with release of beta-D-glucose.. It carries out the reaction DIMBOA beta-D-glucoside + H2O = DIMBOA + D-glucose. It catalyses the reaction DIBOA beta-D-glucoside + H2O = DIBOA + D-glucose. In terms of biological role, acts in defense of young plant parts against pests via the production of hydroxamic acids from hydroxamic acid glucosides. Enzymatic activity is highly correlated with plant growth. The preferred substrate is DIMBOA-beta-D-glucoside. This is 4-hydroxy-7-methoxy-3-oxo-3,4-dihydro-2H-1,4-benzoxazin-2-yl glucoside beta-D-glucosidase 1a, chloroplastic (GLU1A) from Triticum aestivum (Wheat).